Consider the following 247-residue polypeptide: MLLLPLPLLLFFLCSRAEAGEIIGGTECKPHSRPYMAYLEIVTSNGPSKSCGGFLIRRNFVLTAVHCAGRSITVTLGAHNITEKEDTWQKLEVIKQFRHPKYNTSTLHHDIMLLKLKEKASLTLAVGTLPFPSQFNFVPPGRMCRVAGWGRTGVLKPGSDTLQEVKLRLMDPQACSHFRYFDHNLQLCVGNPRKTKSAFKGDSGGPLLCAGVAQGIVSYGRLDAKPPAVFTRISHYRPWINKILQAN.

An N-terminal signal peptide occupies residues 1–19 (MLLLPLPLLLFFLCSRAEA). Residues 20–21 (GE) constitute a propeptide, activation peptide. The Peptidase S1 domain occupies 22–245 (IIGGTECKPH…YRPWINKILQ (224 aa)). An intrachain disulfide couples C51 to C67. H66 functions as the Charge relay system in the catalytic mechanism. Residues N80 and N103 are each glycosylated (N-linked (GlcNAc...) asparagine). D110 functions as the Charge relay system in the catalytic mechanism. Disulfide bonds link C144–C209 and C175–C188. S203 acts as the Charge relay system in catalysis.

Belongs to the peptidase S1 family. Granzyme subfamily.

It is found in the secreted. The protein localises to the cytoplasmic granule. It catalyses the reaction Preferential cleavage: Phe-|-Xaa &gt; Tyr-|-Xaa &gt; Trp-|-Xaa &gt; Leu-|-Xaa.. Functionally, major secreted protease of mast cells with suspected roles in vasoactive peptide generation, extracellular matrix degradation, and regulation of gland secretion. In Macaca fascicularis (Crab-eating macaque), this protein is Chymase (CMA1).